A 467-amino-acid polypeptide reads, in one-letter code: Asparagine--tRNA ligase (467 aa).

Belongs to the class-II aminoacyl-tRNA synthetase family. As to quaternary structure, homodimer.

The protein localises to the cytoplasm. It carries out the reaction tRNA(Asn) + L-asparagine + ATP = L-asparaginyl-tRNA(Asn) + AMP + diphosphate + H(+). This is Asparagine--tRNA ligase from Pasteurella multocida (strain Pm70).